Here is a 184-residue protein sequence, read N- to C-terminus: uncharacterized protein (184 aa).

This is an uncharacterized protein from Caenorhabditis elegans.